Consider the following 1419-residue polypeptide: MSQTAPSDTEYNQRLERWSERLKSQTISHLPTDYSRPVPSRLVEAVFERTLPEDAKTALIKVYVAAQAKGILVTPFNILLTIFIILVSRMTGDEDISIGTSSENAIPFVLRTFIQPSDSFLDLLAKVCDLEKEGSSDAVDFSDLINFLNAKLSKKDDPRKTLVHLRFYNAPDAPSENFLSTTGLDVDLTVLVSVKKPSDQLTSLRSQFTFPDLQLKLIYNQLLFSESRVNIVADQLLKLVVSASKDVTGPIGALDLMTPTQMNVLPDPTVDLDWSGYRGAIQDIFASNAAKFPDRECIVVTPSVTIDAPVTSYTYRQIDESSNILAHHLVKNGIERGDVVMVYAYRGVDLVVAVMGVLKAGATFSVIDPAYPPARQIIYLSVAKPRALVVLEDAGVLSPTVVEYVEKSLELKTYVPALKLAKDGSLTGGSVSKGADDILQHVLHLKSEQTGVVVGPDSTPTLSFTSGSEGIPKGVKGRHFSLAYYFDWMAQEFNLSESDRFTMLSGIAHDPIQRDIFTPLFLGASLIVPTAEDIGTPGQLAQWANKYKVTVTHLTPAMGQLLAAQADEPIPSLHHAFFVGDILTKRDCLRLQVLANNVNVVNMYGTTETQRSVSYFVVPARSQDQTFLESQKDVIPAGRGMKNVQLLVINRFDTNKICGIGEVGEIYLRAGGLAEGYLGNDELTSKKFLKSWFADPSKFVDRTPENAPWKPYWFGIRDRMYRSGDLGRYLPTGNVECSGRADDQIKIRGFRIELGEINTHLSRHPNVRENITLVRRDKDEEPTLVAYIVPQGLNKDDFDSATESEDIVVNGLKKYRKLIHDIREYLKTKLPSYAIPSVIVPLHKMPLNPNGKIDKPALPFPDTSQLAAASRSHSKHGVDETLTATERDIRDIWLRIIPHATDVNKKASFFDIGGHSILATRLIFELRKKFAVNVPLGLVFSEPTIEGLAKEIERMKSGEMISVMDIGKEETREPEIEYGKDALDLVDLIPKEFPTSKDLGIDEPKTVFLTGANGYLGVFILRDLMTRSSNLKVIALVRASSEEHGLKRLKDSCTAYGVWDESWAQKISVVNGDLALENWGIEERKWNKLTEVVDYVIHNGALVHWVYPYSKLRGPNVMGTITALKLCSLGKGKSLSFVSSTSTVDTEYYVNLSNEITSKGGNGIPESDPLQGSSKDLHTGYGQSKWVSEYLVRQAGLRGLRGVVVRPGYILGDSKSGAINTDDFLVRMVKGCIELGLYPNINNTVNMVPADHVARVVTASAFHPEQGVIVAHVTSHPRLRFNQFLGTLSTFGFNTKLSEYVNWRIALERFVINESHDSALYPLLHFVLDNLPANTKAPELDDTNTREILKRDASWTNVDVSNGAAILEHEMGLYLSYLVAIGFLPKPTLEGKKLPEVKINEATLEKLASAGGRGGAPTH.

The Carrier domain maps to 880 to 956; it reads ETLTATERDI…GLAKEIERMK (77 aa). An O-(pantetheine 4'-phosphoryl)serine modification is found at Ser-916.

The protein belongs to the ATP-dependent AMP-binding enzyme family. Requires pantetheine 4'-phosphate as cofactor.

The protein localises to the cytoplasm. It carries out the reaction (S)-2-amino-6-oxohexanoate + NADP(+) + H2O = L-2-aminoadipate + NADPH + 2 H(+). It catalyses the reaction (S)-2-amino-6-oxohexanoate + NAD(+) + H2O = L-2-aminoadipate + NADH + 2 H(+). The enzyme catalyses (S)-2-amino-6-oxohexanoate + AMP + diphosphate + NADP(+) = L-2-aminoadipate + ATP + NADPH + H(+). It functions in the pathway amino-acid biosynthesis; L-lysine biosynthesis via AAA pathway; L-lysine from L-alpha-aminoadipate (fungal route): step 1/3. In terms of biological role, catalyzes the activation of alpha-aminoadipate by ATP-dependent adenylation and the reduction of activated alpha-aminoadipate by NADPH. The activated alpha-aminoadipate is bound to the phosphopantheinyl group of the enzyme itself before it is reduced to (S)-2-amino-6-oxohexanoate. This is L-2-aminoadipate reductase (lys1) from Schizosaccharomyces pombe (strain 972 / ATCC 24843) (Fission yeast).